The primary structure comprises 128 residues: Large ribosomal subunit protein bL20c (128 aa).

Belongs to the bacterial ribosomal protein bL20 family.

It is found in the plastid. Its subcellular location is the chloroplast. Binds directly to 23S ribosomal RNA and is necessary for the in vitro assembly process of the 50S ribosomal subunit. It is not involved in the protein synthesizing functions of that subunit. The sequence is that of Large ribosomal subunit protein bL20c from Trachelium caeruleum (Blue throatwort).